The sequence spans 140 residues: Transcription antitermination protein NusB (140 aa).

It belongs to the NusB family.

Involved in transcription antitermination. Required for transcription of ribosomal RNA (rRNA) genes. Binds specifically to the boxA antiterminator sequence of the ribosomal RNA (rrn) operons. The protein is Transcription antitermination protein NusB of Thermoanaerobacter pseudethanolicus (strain ATCC 33223 / 39E) (Clostridium thermohydrosulfuricum).